We begin with the raw amino-acid sequence, 230 residues long: Large ribosomal subunit protein uL1 (230 aa).

The protein belongs to the universal ribosomal protein uL1 family. Part of the 50S ribosomal subunit.

Its function is as follows. Binds directly to 23S rRNA. The L1 stalk is quite mobile in the ribosome, and is involved in E site tRNA release. Protein L1 is also a translational repressor protein, it controls the translation of the L11 operon by binding to its mRNA. This Bacillus cereus (strain B4264) protein is Large ribosomal subunit protein uL1.